The sequence spans 1028 residues: SWI/SNF-related matrix-associated actin-dependent regulator of chromatin subfamily A containing DEAD/H box 1 (1028 aa).

Residue methionine 1 is modified to N-acetylmethionine. The tract at residues 13 to 81 is disordered; the sequence is KRNKIEEAPE…PENDRKASIS (69 aa). The residue at position 54 (threonine 54) is a Phosphothreonine. Position 57 is a phosphoserine (serine 57). Phosphothreonine is present on threonine 71. A Glycyl lysine isopeptide (Lys-Gly) (interchain with G-Cter in SUMO2) cross-link involves residue lysine 77. Serine 79 is modified (phosphoserine). Residue lysine 84 forms a Glycyl lysine isopeptide (Lys-Gly) (interchain with G-Cter in SUMO2) linkage. 4 positions are modified to phosphoserine: serine 124, serine 127, serine 132, and serine 153. Positions 158–200 constitute a CUE 1 domain; sequence YSDNLSTVRQTRYSENLSSDLLKLIDSTSTMDGAIAAALLMFG. 2 disordered regions span residues 204-253 and 303-348; these read GGGP…NWEK and ASPS…KRKK. Serine 213, serine 216, serine 241, and serine 244 each carry phosphoserine. Residues 253–296 form the CUE 2 domain; the sequence is KQESIVLKLQKEFPNFDKEELREVLKEHEWMYTEALESLKVFAE. Serine 304 carries the post-translational modification Phosphoserine. Residues lysine 337 and lysine 473 each participate in a glycyl lysine isopeptide (Lys-Gly) (interchain with G-Cter in SUMO2) cross-link. One can recognise a Helicase ATP-binding domain in the interval 511 to 679; that stretch reads ALVHKHGLNG…MSLLNFVMPH (169 aa). 523-531 contributes to the ATP binding site; it reads ADEMGLGKT. A DEGH box motif is present at residues 630-633; it reads DEGH. The Nuclear localization signal motif lies at 723–740; it reads RRVKEEVLKQLPPKKDRI. A Glycyl lysine isopeptide (Lys-Gly) (interchain with G-Cter in SUMO2) cross-link involves residue lysine 726. The region spanning 860 to 1012 is the Helicase C-terminal domain; it reads VLGCILSELK…MTTVDEGDEG (153 aa). ATP is bound at residue 899–906; it reads YLRLDGKT. Residue lysine 998 forms a Glycyl lysine isopeptide (Lys-Gly) (interchain with G-Cter in SUMO2) linkage. The short motif at 1007–1010 is the DEAD box element; that stretch reads DEGD.

Belongs to the SNF2/RAD54 helicase family. As to quaternary structure, binds to DNA preferentially in the vicinity of transcriptional start sites. Interacts with MSH2 and TRIM28. Part of a complex composed of TRIM28, HDAC1, HDAC2 and EHMT2. Interacts with PCNA.

It is found in the nucleus. It localises to the chromosome. The catalysed reaction is ATP + H2O = ADP + phosphate + H(+). Functionally, DNA helicase that possesses intrinsic ATP-dependent nucleosome-remodeling activity and is both required for DNA repair and heterochromatin organization. Promotes DNA end resection of double-strand breaks (DSBs) following DNA damage: probably acts by weakening histone DNA interactions in nucleosomes flanking DSBs. Required for the restoration of heterochromatin organization after replication. Acts at replication sites to facilitate the maintenance of heterochromatin by directing H3 and H4 histones deacetylation, H3 'Lys-9' trimethylation (H3K9me3) and restoration of silencing. In Bos taurus (Bovine), this protein is SWI/SNF-related matrix-associated actin-dependent regulator of chromatin subfamily A containing DEAD/H box 1 (SMARCAD1).